A 408-amino-acid chain; its full sequence is S-adenosylmethionine sensor upstream of mTORC1 (408 aa).

Residues 1–16 (MEAAPRSRPRPGGAAA) show a composition bias toward low complexity. The interval 1–37 (MEAAPRSRPRPGGAAASPPPPPPPPPPEQERKLEQEK) is disordered. Over residues 17 to 27 (SPPPPPPPPPP) the composition is skewed to pro residues. Basic and acidic residues predominate over residues 28-37 (EQERKLEQEK). S-adenosyl-L-methionine contacts are provided by Arg-97, Gly-175, Asp-193, Asp-205, Phe-206, and Ser-247.

It belongs to the BMT2/SAMTOR family. As to quaternary structure, interacts with the GATOR1 complex; interaction is disrupted when SAMTOR binds S-adenosyl-L-methionine. Interacts with the KICSTOR complex; interaction is disrupted when SAMTOR binds S-adenosyl-L-methionine.

Its function is as follows. S-adenosyl-L-methionine-binding protein that acts as an inhibitor of mTORC1 signaling via interaction with the GATOR1 and KICSTOR complexes. Acts as a sensor of S-adenosyl-L-methionine to signal methionine sufficiency to mTORC1: in presence of methionine, binds S-adenosyl-L-methionine, leading to disrupt interaction with the GATOR1 and KICSTOR complexes and promote mTORC1 signaling. Upon methionine starvation, S-adenosyl-L-methionine levels are reduced, thereby promoting the association with GATOR1 and KICSTOR, leading to inhibit mTORC1 signaling. Probably also acts as a S-adenosyl-L-methionine-dependent methyltransferase. The protein is S-adenosylmethionine sensor upstream of mTORC1 of Gallus gallus (Chicken).